Consider the following 409-residue polypeptide: Serine protease inhibitor 2 (409 aa).

The signal sequence occupies residues 1–21 (MNKLNFVILCLAALLVFDATA). 2 N-linked (GlcNAc...) asparagine glycosylation sites follow: Asn294 and Asn324. Positions 356–360 (LGSEA) match the Hinge region; required for binding to peptidase motif.

This sequence belongs to the serpin family. In terms of assembly, forms a covalent heterodimer with protease CLIPB9; the interaction inhibits CLIPB9 protease activity. Forms a covalent heterodimer with protease CLIPB10; the interaction inhibits CLIPB10 catalytic activity. Interacts with CLIPB4 in the hemolymph of immune-challenged female mosquitoes; the interaction results in CLIPB4 inhibition. Post-translationally, protease CLIPB9 binds to SRPN2 via the hinge region resulting in the cleavage of the reactive bond. This leads to a conformational change in SRPN2 which traps CLIPB9 and distorts its active site, resulting in CLIPB9 inactivation.

The protein localises to the secreted. Functionally, serine protease inhibitor that functions in the melanization-mediated immune response. By preventing the activation of phenoloxidases through the inhibiting of serine proteases CLIPB9, CLIPB10 and CLIPB4, negatively regulates melanization in the hemolymph. By preventing melanization, has a detrimental role during P.berghei parasite mediated-infection and invasion of the mosquito midgut. The chain is Serine protease inhibitor 2 from Anopheles gambiae (African malaria mosquito).